The following is a 245-amino-acid chain: DNA repair protein RecO (245 aa).

It belongs to the RecO family.

Functionally, involved in DNA repair and RecF pathway recombination. This Porphyromonas gingivalis (strain ATCC BAA-308 / W83) protein is DNA repair protein RecO.